The chain runs to 425 residues: Isocitrate dehydrogenase [NADP] (425 aa).

Threonine 114 is an NADP(+) binding site. D-threo-isocitrate is bound by residues serine 123, asparagine 125, arginine 129, arginine 139, and arginine 162. Residue aspartate 316 coordinates Mg(2+). NADP(+) is bound by residues 348-354 (HGTAPKY), asparagine 361, tyrosine 400, and arginine 404.

Belongs to the isocitrate and isopropylmalate dehydrogenases family. As to quaternary structure, homodimer. The cofactor is Mg(2+). It depends on Mn(2+) as a cofactor.

The enzyme catalyses D-threo-isocitrate + NADP(+) = 2-oxoglutarate + CO2 + NADPH. Functionally, catalyzes the oxidative decarboxylation of isocitrate to 2-oxoglutarate and carbon dioxide with the concomitant reduction of NADP(+). This chain is Isocitrate dehydrogenase [NADP] (icd), found in Helicobacter pylori (strain J99 / ATCC 700824) (Campylobacter pylori J99).